The primary structure comprises 342 residues: N-acetyl-gamma-glutamyl-phosphate reductase (342 aa).

The active site involves C149.

It belongs to the NAGSA dehydrogenase family. Type 1 subfamily.

The protein localises to the cytoplasm. It carries out the reaction N-acetyl-L-glutamate 5-semialdehyde + phosphate + NADP(+) = N-acetyl-L-glutamyl 5-phosphate + NADPH + H(+). Its pathway is amino-acid biosynthesis; L-arginine biosynthesis; N(2)-acetyl-L-ornithine from L-glutamate: step 3/4. In terms of biological role, catalyzes the NADPH-dependent reduction of N-acetyl-5-glutamyl phosphate to yield N-acetyl-L-glutamate 5-semialdehyde. This chain is N-acetyl-gamma-glutamyl-phosphate reductase, found in Ruegeria pomeroyi (strain ATCC 700808 / DSM 15171 / DSS-3) (Silicibacter pomeroyi).